Consider the following 377-residue polypeptide: N5-carboxyaminoimidazole ribonucleotide synthase (377 aa).

ATP is bound by residues arginine 93, lysine 133, 138–144 (GYDGRGQ), 175–178 (EEFV), glutamate 183, histidine 206, and 257–258 (NE). Residues 97–287 (KTLLDHAGVR…QFENHLRAVC (191 aa)) form the ATP-grasp domain.

It belongs to the PurK/PurT family. In terms of assembly, homodimer.

It catalyses the reaction 5-amino-1-(5-phospho-beta-D-ribosyl)imidazole + hydrogencarbonate + ATP = 5-carboxyamino-1-(5-phospho-D-ribosyl)imidazole + ADP + phosphate + 2 H(+). It functions in the pathway purine metabolism; IMP biosynthesis via de novo pathway; 5-amino-1-(5-phospho-D-ribosyl)imidazole-4-carboxylate from 5-amino-1-(5-phospho-D-ribosyl)imidazole (N5-CAIR route): step 1/2. Functionally, catalyzes the ATP-dependent conversion of 5-aminoimidazole ribonucleotide (AIR) and HCO(3)(-) to N5-carboxyaminoimidazole ribonucleotide (N5-CAIR). In Vibrio vulnificus (strain YJ016), this protein is N5-carboxyaminoimidazole ribonucleotide synthase.